A 679-amino-acid polypeptide reads, in one-letter code: DNA ligase (679 aa).

NAD(+) is bound by residues 36–40 (DAQYD), 85–86 (SL), and glutamate 116. The active-site N6-AMP-lysine intermediate is lysine 118. Residues arginine 139, glutamate 174, lysine 300, and lysine 324 each coordinate NAD(+). Positions 418, 421, 436, and 441 each coordinate Zn(2+). A BRCT domain is found at 600-679 (EGGGPLNGKV…NEFRELTGRK (80 aa)).

Belongs to the NAD-dependent DNA ligase family. LigA subfamily. Requires Mg(2+) as cofactor. Mn(2+) serves as cofactor.

The enzyme catalyses NAD(+) + (deoxyribonucleotide)n-3'-hydroxyl + 5'-phospho-(deoxyribonucleotide)m = (deoxyribonucleotide)n+m + AMP + beta-nicotinamide D-nucleotide.. In terms of biological role, DNA ligase that catalyzes the formation of phosphodiester linkages between 5'-phosphoryl and 3'-hydroxyl groups in double-stranded DNA using NAD as a coenzyme and as the energy source for the reaction. It is essential for DNA replication and repair of damaged DNA. The polypeptide is DNA ligase (Pelotomaculum thermopropionicum (strain DSM 13744 / JCM 10971 / SI)).